A 291-amino-acid polypeptide reads, in one-letter code: Small ribosomal subunit protein uS2 (291 aa).

The segment at 241–270 is disordered; it reads KREPRQINRPVMSSENQAEQQTSVANENVQ. Over residues 251–270 the composition is skewed to polar residues; sequence VMSSENQAEQQTSVANENVQ.

The protein belongs to the universal ribosomal protein uS2 family.

The protein is Small ribosomal subunit protein uS2 of Mycoplasma capricolum subsp. capricolum (strain California kid / ATCC 27343 / NCTC 10154).